The following is a 631-amino-acid chain: PTS system beta-glucoside-specific EIIBCA component (631 aa).

Positions Met-1 to Ser-86 constitute a PTS EIIB type-1 domain. Cys-26 serves as the catalytic Phosphocysteine intermediate; for EIIB activity. One can recognise a PTS EIIC type-1 domain in the interval Asp-105–Ser-466. Helical transmembrane passes span Ala-120–Ser-140, Leu-146–Ala-166, Phe-175–Ala-195, Phe-206–Ala-226, Phe-248–Pro-268, Val-295–Leu-315, Leu-328–Leu-348, Ile-358–Val-378, Pro-385–Thr-405, and Ala-434–Val-454. Positions Asp-501–Asn-605 constitute a PTS EIIA type-1 domain. The active-site Tele-phosphohistidine intermediate; for EIIA activity is His-553.

The protein localises to the cell inner membrane. Functionally, the phosphoenolpyruvate-dependent sugar phosphotransferase system (sugar PTS), a major carbohydrate active -transport system, catalyzes the phosphorylation of incoming sugar substrates concomitantly with their translocation across the cell membrane. This system is involved in beta-glucoside transport. Acts both as a kinase and as a phosphatase on ArbG. This is PTS system beta-glucoside-specific EIIBCA component (arbF) from Dickeya chrysanthemi (Pectobacterium chrysanthemi).